Consider the following 756-residue polypeptide: Cholesterol uptake protein 1 (756 aa).

A signal peptide spans 1 to 18 (MRTSQAIFILIFLDSVRN). Over 19-268 (QSPQVIPAKW…TIESSMKIFD (250 aa)) the chain is Extracellular. 2 N-linked (GlcNAc...) asparagine glycosylation sites follow: asparagine 39 and asparagine 63. A Cholesterol-binding sequence motif motif is present at residues 124–129 (VHYNFR). N-linked (GlcNAc...) asparagine glycans are attached at residues asparagine 140, asparagine 174, and asparagine 257. The helical transmembrane segment at 269-289 (YTIPIVFWACILLLVTIVVFV) threads the bilayer. Residues 290–373 (YHYFDGIWER…YEERELKYDV (84 aa)) lie on the Cytoplasmic side of the membrane. Residues 374 to 394 (YKIALAIIGIFYNITVLQLII) traverse the membrane as a helical segment. Residues 395 to 421 (SKAGSLRQSGDLDECTFNFQCARPLWY) lie on the Extracellular side of the membrane. The chain crosses the membrane as a helical span at residues 422-442 (FVAFNNVVSNGGYVYFGTLII). Residues 443–473 (VMNYCRERSFRRLFAVQPTLAERYGLPQHSG) lie on the Cytoplasmic side of the membrane. Residues 474-494 (LMTAIGLAVIMEGISSATYHV) traverse the membrane as a helical segment. Over 495 to 498 (CPNN) the chain is Extracellular. Residues 499–517 (INYQFDTALMYVIGMLGKL) form a helical membrane-spanning segment. Residues 518 to 530 (KIWSLRHPDMVVS) are Cytoplasmic-facing. Residues 531 to 551 (AYHAFGFLGVFLMAAIAGVYV) traverse the membrane as a helical segment. Over 552-554 (HNM) the chain is Extracellular. A helical membrane pass occupies residues 555 to 575 (IFWALFSIIYIASMLLVSLEF). A Cholesterol-binding sequence motif motif is present at residues 570–578 (LVSLEFYFK). The Cytoplasmic segment spans residues 576-612 (YFKGIWTLNLRELRNSIRLSWVSSRHLSCVVPAYKAR). Residues 613–633 (FFVILLLNIANTAVVVYGLEA) traverse the membrane as a helical segment. At 634 to 637 (HPKD) the chain is on the extracellular side. The helical transmembrane segment at 638–658 (FLSFLLIPFIGNLFIYIIYYI) threads the bilayer. Over 659-671 (LMKMIYREKIPKR) the chain is Cytoplasmic. The helical transmembrane segment at 672 to 692 (AIALLFAAVISWTCAGILFNQ) threads the bilayer. Residues 693–728 (RVSDWSKMPAISRELNKPCIFLNFYDNHDLWHLSSA) are Extracellular-facing. Residues 729-749 (FAIFFSFTAINVIDDDLMFVM) form a helical membrane-spanning segment. Residues 750–756 (RNTIRVF) lie on the Cytoplasmic side of the membrane.

The protein belongs to the SID1 family. As to expression, highly expressed along the intestine with expression also detected in the pharynx, especially at the terminal bulb, and in the excretory gland cells.

It localises to the cell membrane. It catalyses the reaction cholesterol(in) = cholesterol(out). In terms of biological role, cholesterol-binding protein which is involved in dietary cholesterol uptake from the environment. Does not play a role in double-stranded RNA transport in contrast to other SID1 family members. This Caenorhabditis elegans protein is Cholesterol uptake protein 1.